The sequence spans 490 residues: Cyclin-A2-1 (490 aa).

Residues 34-76 are disordered; it reads FAPSVSLPARTERKQTAKGKTKRGALDEITSASTATSAPQPKR. Residues 63-72 are compositionally biased toward polar residues; sequence TSASTATSAP.

This sequence belongs to the cyclin family. Cyclin AB subfamily.

This is Cyclin-A2-1 (CYCA2-1) from Oryza sativa subsp. japonica (Rice).